The chain runs to 326 residues: MVWANAKMRLALSLVTVFFGISLANLEVGFYSNTCPQAESIVKRVVSGAALSDPNLPAILLRLHFHDCFVEGCDGSILVNNGAISEKNAFGHEGVRGFEIVEAVKAELEAACPGVVSCSDIVALAARDAISLANGPAYEVPTGRRDGRVSNMSLAKDMPEVSDSIEILKAKFMQKGLNAKDLVLLSAAHTIGTTACFFMSKRLYDFLPGGQPDPTINPTFLPELTTQCPQNGDINVRLPIDRFSERLFDKQILQNIKDGFAVLQTDAGLYEDVTTRQVVDSYLGMLNPFFGPTFESDFVKAIVKMGKIGVKTGFKGEIRRVCSAFN.

Residues Met1–Ala24 form the signal peptide. 4 disulfides stabilise this stretch: Cys35–Cys112, Cys68–Cys73, Cys118–Cys322, and Cys196–Cys228. Catalysis depends on His66, which acts as the Proton acceptor. Positions 67, 70, 72, 74, and 76 each coordinate Ca(2+). Asn151 is a glycosylation site (N-linked (GlcNAc...) asparagine). Pro159 contacts substrate. His189 contributes to the heme b binding site. Thr190 lines the Ca(2+) pocket. Ca(2+) is bound by residues Asp241, Ser244, and Asp249.

It belongs to the peroxidase family. Classical plant (class III) peroxidase subfamily. It depends on heme b as a cofactor. Ca(2+) is required as a cofactor.

It localises to the secreted. It catalyses the reaction 2 a phenolic donor + H2O2 = 2 a phenolic radical donor + 2 H2O. Its function is as follows. Removal of H(2)O(2), oxidation of toxic reductants, biosynthesis and degradation of lignin, suberization, auxin catabolism, response to environmental stresses such as wounding, pathogen attack and oxidative stress. These functions might be dependent on each isozyme/isoform in each plant tissue. This is Peroxidase 43 (PER43) from Arabidopsis thaliana (Mouse-ear cress).